The primary structure comprises 438 residues: DNA primase DnaG (438 aa).

Residues 171–245 (DAILVVEGRA…DIDYVARAPE (75 aa)) form the Toprim domain. Mg(2+) contacts are provided by E177, D219, and D221.

It belongs to the archaeal DnaG primase family. As to quaternary structure, forms a ternary complex with MCM helicase and DNA. Component of the archaeal exosome complex. Mg(2+) serves as cofactor.

The catalysed reaction is ssDNA + n NTP = ssDNA/pppN(pN)n-1 hybrid + (n-1) diphosphate.. RNA polymerase that catalyzes the synthesis of short RNA molecules used as primers for DNA polymerase during DNA replication. Also part of the exosome, which is a complex involved in RNA degradation. Acts as a poly(A)-binding protein that enhances the interaction between heteromeric, adenine-rich transcripts and the exosome. The sequence is that of DNA primase DnaG from Methanothrix thermoacetophila (strain DSM 6194 / JCM 14653 / NBRC 101360 / PT) (Methanosaeta thermophila).